The chain runs to 255 residues: Small ribosomal subunit protein eS1 (255 aa).

The residue at position 2 (Ala2) is an N-acetylalanine; partial.

This sequence belongs to the eukaryotic ribosomal protein eS1 family. Component of the small ribosomal subunit. Mature ribosomes consist of a small (40S) and a large (60S) subunit. The 40S subunit contains about 33 different proteins and 1 molecule of RNA (18S). The 60S subunit contains about 49 different proteins and 3 molecules of RNA (25S, 5.8S and 5S).

Its subcellular location is the cytoplasm. The polypeptide is Small ribosomal subunit protein eS1 (Vanderwaltozyma polyspora (strain ATCC 22028 / DSM 70294 / BCRC 21397 / CBS 2163 / NBRC 10782 / NRRL Y-8283 / UCD 57-17) (Kluyveromyces polysporus)).